We begin with the raw amino-acid sequence, 217 residues long: Homologous-pairing protein 2 homolog (217 aa).

Residues 89–117 are interaction with NR3C1, homodimerization and transcriptional activation almost abolished when missing; the sequence is LDASIMALTAKVQGLQQSCRHMEAELKEL. A coiled-coil region spans residues 93 to 153; it reads IMALTAKVQG…LKNIKAATNH (61 aa). Positions 118–182 are DNA-binding; that stretch reads TSALTTPEMQ…WRKRKRMTTE (65 aa). An interaction with NR3C1 decreased when missing region spans residues 118-182; the sequence is TSALTTPEMQ…WRKRKRMTTE (65 aa).

The protein belongs to the HOP2 family. Forms a stable heterodimer with MND1. Interacts with PSMC3/TBP1. Interacts with the DNA-binding domain of the nuclear receptors NR3C1/GR, ESR2/ER-beta, THRB and RXRA. Post-translationally, phosphorylated by PKA, PKC and MAPK.

It localises to the nucleus. Its function is as follows. Plays an important role in meiotic recombination. Stimulates DMC1-mediated strand exchange required for pairing homologous chromosomes during meiosis. The complex PSMC3IP/MND1 binds DNA, stimulates the recombinase activity of DMC1 as well as DMC1 D-loop formation from double-strand DNA. This complex stabilizes presynaptic RAD51 and DMC1 filaments formed on single strand DNA to capture double-strand DNA. This complex stimulates both synaptic and presynaptic critical steps in RAD51 and DMC1-promoted homologous pairing. May inhibit HIV-1 viral protein TAT activity and modulate the activity of proteasomes through association with PSMC3. Plays a role as a coactivator in nuclear receptor-mediated transcription. The sequence is that of Homologous-pairing protein 2 homolog (Psmc3ip) from Rattus norvegicus (Rat).